A 213-amino-acid polypeptide reads, in one-letter code: Anti-sigma-E factor ChrR (213 aa).

The tract at residues 2–85 (TIRHHVSDAL…QIQRPAPARR (84 aa)) is sufficient to bind sigma factor and inhibit its activity. H6, H31, C35, C38, H141, H143, E147, and H177 together coordinate Zn(2+). The required for response to singlet oxygen stretch occupies residues 86–194 (ADPRAPAPLA…LDCICLAATD (109 aa)).

The protein belongs to the zinc-associated anti-sigma factor (ZAS) superfamily. Forms a 1:1 complex with cognate ECF RNA polymerase sigma factor RpoE; this inhibits the interaction of RpoE with the RNA polymerase catalytic core. Requires Zn(2+) as cofactor.

Anti-sigma factor that inhibits the activity of the extracytoplasmic function (ECF) sigma-E factor (RpoE), thereby indirectly regulating the transcription of the cycA and rpoE genes. ECF sigma factors are held in an inactive form by a cognate anti-sigma factor. This chain is Anti-sigma-E factor ChrR (chrR), found in Cereibacter sphaeroides (strain ATCC 17023 / DSM 158 / JCM 6121 / CCUG 31486 / LMG 2827 / NBRC 12203 / NCIMB 8253 / ATH 2.4.1.) (Rhodobacter sphaeroides).